The following is a 573-amino-acid chain: Urease subunit alpha 2 (573 aa).

A Urease domain is found at 135 to 573 (GGMDTHVHYI…ISLNQLYFFS (439 aa)). 3 residues coordinate Ni(2+): H140, H142, and K223. The residue at position 223 (K223) is an N6-carboxylysine. H225 is a substrate binding site. Ni(2+) is bound by residues H252 and H278. Catalysis depends on H326, which acts as the Proton donor. Position 366 (D366) interacts with Ni(2+).

It belongs to the metallo-dependent hydrolases superfamily. Urease alpha subunit family. As to quaternary structure, heterotrimer of UreA (gamma), UreB (beta) and UreC (alpha) subunits. Three heterotrimers associate to form the active enzyme. It depends on Ni cation as a cofactor. In terms of processing, carboxylation allows a single lysine to coordinate two nickel ions.

Its subcellular location is the cytoplasm. The enzyme catalyses urea + 2 H2O + H(+) = hydrogencarbonate + 2 NH4(+). Its pathway is nitrogen metabolism; urea degradation; CO(2) and NH(3) from urea (urease route): step 1/1. In terms of biological role, disrupting the ure2 operon has no effect on urease activity, or pathogen survival in BALB/c mice when inoculated by gavage, but confers slightly enhanced resistance to low pH killing in vitro. The chain is Urease subunit alpha 2 from Brucella suis biovar 1 (strain 1330).